The sequence spans 350 residues: UPF0284 protein MJ1598 (350 aa).

This sequence belongs to the UPF0284 family.

The polypeptide is UPF0284 protein MJ1598 (Methanocaldococcus jannaschii (strain ATCC 43067 / DSM 2661 / JAL-1 / JCM 10045 / NBRC 100440) (Methanococcus jannaschii)).